The chain runs to 121 residues: Phosphoribosyl-AMP cyclohydrolase (121 aa).

Asp76 is a binding site for Mg(2+). Cys77 provides a ligand contact to Zn(2+). Asp78 and Asp80 together coordinate Mg(2+). Zn(2+) contacts are provided by Cys93 and Cys100.

Belongs to the PRA-CH family. As to quaternary structure, homodimer. Mg(2+) serves as cofactor. The cofactor is Zn(2+).

The protein localises to the cytoplasm. The enzyme catalyses 1-(5-phospho-beta-D-ribosyl)-5'-AMP + H2O = 1-(5-phospho-beta-D-ribosyl)-5-[(5-phospho-beta-D-ribosylamino)methylideneamino]imidazole-4-carboxamide. It functions in the pathway amino-acid biosynthesis; L-histidine biosynthesis; L-histidine from 5-phospho-alpha-D-ribose 1-diphosphate: step 3/9. Catalyzes the hydrolysis of the adenine ring of phosphoribosyl-AMP. The chain is Phosphoribosyl-AMP cyclohydrolase from Methanococcoides burtonii (strain DSM 6242 / NBRC 107633 / OCM 468 / ACE-M).